A 774-amino-acid chain; its full sequence is MTMAAKTDREALQAALPPLSGSLSIPGLSAPVRVQRDGWGIPHIKASGEADAYRALGFVHAQDRLFQMELTRRKALGRAAEWLGAEAAEADILVRRLGMEKVCRRDFEALGAEAKDMLRAYVAGVNAFLASGAPLPIEYGLLGAEPEPWEPWHSIAVMRRLGLLMGSVWFKLWRMLALPVVGAANALKLRYDDGGQDLLCIPPGVEAERLEADLAALRPAVDALLKAMGGDASDAAGGGSNNWAVAPGRTATGRPILAGDPHRVFEIPGMYAQHHLACDRFDMIGLTVPGVPGFPHFAHNGKVAYCVTHAFMDIHDLYLEQFAEDGRTARFGNEFEPVAWRRDRIAVRGGADREFDIVETRHGPVIAGDPLEGAALTLRSVQFAETDLSFDCLTRMPGASTVAQLYDATRGWGLIDHNLVAGDVAGSIGHLVRARVPSRPRENGWLPVPGWSGEHEWRGWIPHEAMPRVIDPPGGLIVTANNRVVADDHPDYLCTDCHPPYRAERIMERLVASPAFAVDDAAAIHADTLSPHVGLLRARLEALGIQGSLPAEELRQTLIAWDGRMDAGSQAASAYNAFRRALTRLVTARSGLEQAIAHPFAAVPPGVSPQGQVWWAVPTLLRNDDAGMLKGWSWDEALSEALSVATQNLTGRGWGEEHRPRFTHPLSAQFPAWAALLNPVSRPIGGDGDTVLANGLVPSAGPEATYGALSRYVFDVGNWDNSRWVVFHGASGHPASPHYADQNAPWSDCAMVPMLYSWDRIAAEAVTSQELVPA.

The Nucleophile role is filled by serine 240.

Belongs to the peptidase S45 family. As to quaternary structure, heterodimer of a small subunit and a large subunit processed from the same precursor.

It carries out the reaction a penicillin + H2O = 6-aminopenicillanate + a carboxylate. This is Penicillin acylase 2 proenzyme (acyII) from Pseudomonas sp. (strain SE83).